The following is a 161-amino-acid chain: MAINSSGTKVLSFVRSVWQDFVNTNGFDAHVVSDIQIISAVPGFVECSLKLQKHHLNRMGNLHGGCIAALTDLGGSLALASRGLFISGVSIDMNQTFLQSGGTLGSSILLHAKCDRLGSNIAFTSVDFLTSSNEVFAKGRHTKFVRNALGDPRNCLDLAED.

The protein belongs to the thioesterase PaaI family.

The protein is Putative esterase C31F10.02 of Schizosaccharomyces pombe (strain 972 / ATCC 24843) (Fission yeast).